A 251-amino-acid chain; its full sequence is Triosephosphate isomerase (251 aa).

9 to 11 contributes to the substrate binding site; that stretch reads NWK. His95 serves as the catalytic Electrophile. Catalysis depends on Glu167, which acts as the Proton acceptor. Residues Gly173, Ser212, and 233-234 each bind substrate; that span reads GG.

It belongs to the triosephosphate isomerase family. In terms of assembly, homodimer.

Its subcellular location is the cytoplasm. The enzyme catalyses D-glyceraldehyde 3-phosphate = dihydroxyacetone phosphate. Its pathway is carbohydrate biosynthesis; gluconeogenesis. The protein operates within carbohydrate degradation; glycolysis; D-glyceraldehyde 3-phosphate from glycerone phosphate: step 1/1. In terms of biological role, involved in the gluconeogenesis. Catalyzes stereospecifically the conversion of dihydroxyacetone phosphate (DHAP) to D-glyceraldehyde-3-phosphate (G3P). This chain is Triosephosphate isomerase, found in Pseudomonas fluorescens (strain Pf0-1).